A 286-amino-acid chain; its full sequence is Phosphatidylserine decarboxylase proenzyme (286 aa).

Residues Asp-89, His-146, and Ser-252 each act as charge relay system; for autoendoproteolytic cleavage activity in the active site. The active-site Schiff-base intermediate with substrate; via pyruvic acid; for decarboxylase activity is the Ser-252. At Ser-252 the chain carries Pyruvic acid (Ser); by autocatalysis.

This sequence belongs to the phosphatidylserine decarboxylase family. PSD-B subfamily. Prokaryotic type I sub-subfamily. In terms of assembly, heterodimer of a large membrane-associated beta subunit and a small pyruvoyl-containing alpha subunit. Pyruvate serves as cofactor. In terms of processing, is synthesized initially as an inactive proenzyme. Formation of the active enzyme involves a self-maturation process in which the active site pyruvoyl group is generated from an internal serine residue via an autocatalytic post-translational modification. Two non-identical subunits are generated from the proenzyme in this reaction, and the pyruvate is formed at the N-terminus of the alpha chain, which is derived from the carboxyl end of the proenzyme. The autoendoproteolytic cleavage occurs by a canonical serine protease mechanism, in which the side chain hydroxyl group of the serine supplies its oxygen atom to form the C-terminus of the beta chain, while the remainder of the serine residue undergoes an oxidative deamination to produce ammonia and the pyruvoyl prosthetic group on the alpha chain. During this reaction, the Ser that is part of the protease active site of the proenzyme becomes the pyruvoyl prosthetic group, which constitutes an essential element of the active site of the mature decarboxylase.

The protein resides in the cell membrane. The enzyme catalyses a 1,2-diacyl-sn-glycero-3-phospho-L-serine + H(+) = a 1,2-diacyl-sn-glycero-3-phosphoethanolamine + CO2. It functions in the pathway phospholipid metabolism; phosphatidylethanolamine biosynthesis; phosphatidylethanolamine from CDP-diacylglycerol: step 2/2. Functionally, catalyzes the formation of phosphatidylethanolamine (PtdEtn) from phosphatidylserine (PtdSer). This chain is Phosphatidylserine decarboxylase proenzyme, found in Shewanella loihica (strain ATCC BAA-1088 / PV-4).